A 308-amino-acid polypeptide reads, in one-letter code: Transcriptional adapter 1-2 (308 aa).

Belongs to the TADA1 family. In terms of assembly, component of the Spt-Ada-Gcn5 acetyltransferase (SAGA) complex consisting of wda/Taf5L, Saf6, Taf9, Taf10b, Taf12, Ada1, Spt3, Spt7, Spt20, Sf3b3, Sf3b5, Nipped-A/Tra1, a histone acetyltransferase (HAT) module made up of Gcn5, Ada2b (Isoform B), Ada3 and Sgf29, and a deubiquitinase (DUB) module made up of not/nonstop, Sgf11 and e(y)2 tethered to SAGA by Atxn7. Not a component of the Ada2a-containing ATAC complex.

It is found in the nucleus. Component of the transcription regulatory complex SAGA, a multiprotein complex that activates transcription by remodeling chromatin and mediating histone acetylation and deubiquitination. The SAGA complex predominantly acetylates histone H3. In Drosophila melanogaster (Fruit fly), this protein is Transcriptional adapter 1-2.